Consider the following 300-residue polypeptide: Quinolinate synthase (300 aa).

Iminosuccinate-binding residues include H23 and S40. Residue C85 coordinates [4Fe-4S] cluster. Iminosuccinate-binding positions include 111–113 and S128; that span reads YIN. C171 provides a ligand contact to [4Fe-4S] cluster. Iminosuccinate-binding positions include 198–200 and T215; that span reads HPE. Position 258 (C258) interacts with [4Fe-4S] cluster.

This sequence belongs to the quinolinate synthase family. Type 2 subfamily. The cofactor is [4Fe-4S] cluster.

It localises to the cytoplasm. The catalysed reaction is iminosuccinate + dihydroxyacetone phosphate = quinolinate + phosphate + 2 H2O + H(+). Its pathway is cofactor biosynthesis; NAD(+) biosynthesis; quinolinate from iminoaspartate: step 1/1. Its function is as follows. Catalyzes the condensation of iminoaspartate with dihydroxyacetone phosphate to form quinolinate. This chain is Quinolinate synthase, found in Clostridium novyi (strain NT).